A 456-amino-acid polypeptide reads, in one-letter code: N(6)-adenosine-methyltransferase non-catalytic subunit METTL14 (456 aa).

A disordered region spans residues 50-75 (TCRASYDTSAPNAKRKYLDEGETDED). Interaction with METTL3 regions lie at residues 135-136 (RD) and 237-238 (SG). A positively charged region required for RNA-binding region spans residues 245–254 (RVCLRKWGYR). Interaction with METTL3 regions lie at residues 255–258 (RCED) and 278–287 (KAVFQRTKEH). Positions 297 to 298 (KR) are positively charged region required for RNA-binding. The interaction with METTL3 stretch occupies residues 308 to 312 (NVDID). Residues 393–456 (ERLRPKSPPP…GAHRGGFPPR (64 aa)) are disordered. Ser399 bears the Phosphoserine mark. The span at 409 to 423 (GGGAPRGGGRGGTSA) shows a compositional bias: gly residues. Residues 425–440 (RGRERNRSNFRGERGG) are compositionally biased toward basic and acidic residues. Gly residues predominate over residues 441-450 (FRGGRGGAHR).

This sequence belongs to the MT-A70-like family. As to quaternary structure, heterodimer; heterodimerizes with METTL3 to form an antiparallel heterodimer that constitutes an active methyltransferase. Component of the WMM complex, a N6-methyltransferase complex composed of a catalytic subcomplex, named MAC, and of an associated subcomplex, named MACOM. The MAC subcomplex is composed of METTL3 and METTL14. The MACOM subcomplex is composed of WTAP, ZC3H13, CBLL1/HAKAI, VIRMA, and, in some cases of RBM15 (RBM15 or RBM15B).

The protein localises to the nucleus. Functionally, the METTL3-METTL14 heterodimer forms a N6-methyltransferase complex that methylates adenosine residues at the N(6) position of some mRNAs and regulates the circadian clock, differentiation of embryonic stem cells and cortical neurogenesis. In the heterodimer formed with METTL3, METTL14 constitutes the RNA-binding scaffold that recognizes the substrate rather than the catalytic core. N6-methyladenosine (m6A), which takes place at the 5'-[AG]GAC-3' consensus sites of some mRNAs, plays a role in mRNA stability and processing. M6A acts as a key regulator of mRNA stability by promoting mRNA destabilization and degradation. In embryonic stem cells (ESCs), m6A methylation of mRNAs encoding key naive pluripotency-promoting transcripts results in transcript destabilization. M6A regulates spermatogonial differentiation and meiosis and is essential for male fertility and spermatogenesis. M6A also regulates cortical neurogenesis: m6A methylation of transcripts related to transcription factors, neural stem cells, the cell cycle and neuronal differentiation during brain development promotes their destabilization and decay, promoting differentiation of radial glial cells. This chain is N(6)-adenosine-methyltransferase non-catalytic subunit METTL14, found in Homo sapiens (Human).